A 156-amino-acid chain; its full sequence is Small ribosomal subunit protein uS7 (156 aa).

Belongs to the universal ribosomal protein uS7 family. As to quaternary structure, part of the 30S ribosomal subunit. Contacts proteins S9 and S11.

Functionally, one of the primary rRNA binding proteins, it binds directly to 16S rRNA where it nucleates assembly of the head domain of the 30S subunit. Is located at the subunit interface close to the decoding center, probably blocks exit of the E-site tRNA. This is Small ribosomal subunit protein uS7 from Paenarthrobacter aurescens (strain TC1).